The sequence spans 131 residues: Large ribosomal subunit protein bL12 (131 aa).

The protein belongs to the bacterial ribosomal protein bL12 family. Homodimer. Part of the ribosomal stalk of the 50S ribosomal subunit. Forms a multimeric L10(L12)X complex, where L10 forms an elongated spine to which 2 to 4 L12 dimers bind in a sequential fashion. Binds GTP-bound translation factors.

Forms part of the ribosomal stalk which helps the ribosome interact with GTP-bound translation factors. Is thus essential for accurate translation. The protein is Large ribosomal subunit protein bL12 of Tropheryma whipplei (strain Twist) (Whipple's bacillus).